We begin with the raw amino-acid sequence, 230 residues long: Sugar fermentation stimulation protein homolog (230 aa).

The protein belongs to the SfsA family.

The polypeptide is Sugar fermentation stimulation protein homolog (Pyrococcus furiosus (strain ATCC 43587 / DSM 3638 / JCM 8422 / Vc1)).